The chain runs to 307 residues: Elongation factor Ts, mitochondrial (307 aa).

The transit peptide at 1-19 (MIFTRLTRFVGHGTGLRLY) directs the protein to the mitochondrion.

Belongs to the EF-Ts family.

It is found in the mitochondrion. In terms of biological role, associates with the EF-Tu.GDP complex and induces the exchange of GDP to GTP. It remains bound to the aminoacyl-tRNA.EF-Tu.GTP complex up to the GTP hydrolysis stage on the ribosome. This Aedes aegypti (Yellowfever mosquito) protein is Elongation factor Ts, mitochondrial.